A 348-amino-acid chain; its full sequence is Rhodopsin (348 aa).

Met-1 is subject to N-acetylmethionine. Over Met-1 to Gln-36 the chain is Extracellular. N-linked (GlcNAc...) asparagine glycans are attached at residues Asn-2 and Asn-15. Residues Phe-37 to Val-61 form a helical membrane-spanning segment. The Cytoplasmic segment spans residues Thr-62–Asn-73. The helical transmembrane segment at Tyr-74–Tyr-96 threads the bilayer. Over Thr-97–Cys-110 the chain is Extracellular. Cysteines 110 and 187 form a disulfide. A helical transmembrane segment spans residues Asn-111–Ile-133. The 'Ionic lock' involved in activated form stabilization signature appears at Glu-134–Tyr-136. Residues Glu-134–His-152 lie on the Cytoplasmic side of the membrane. Residues Ala-153–Val-173 traverse the membrane as a helical segment. At Gly-174–Ser-202 the chain is on the extracellular side. Residue Glu-201 participates in Zn(2+) binding. The helical transmembrane segment at Phe-203–Gly-224 threads the bilayer. At Gln-225–Arg-252 the chain is on the cytoplasmic side. A helical membrane pass occupies residues Met-253–Tyr-274. Over Ile-275–Ile-286 the chain is Extracellular. Gln-279 contacts Zn(2+). Residues Phe-287–Met-308 form a helical membrane-spanning segment. Lys-296 is subject to N6-(retinylidene)lysine. At Met-309 to Ala-348 the chain is on the cytoplasmic side. 2 S-palmitoyl cysteine lipidation sites follow: Cys-322 and Cys-323. The interaction with SAG stretch occupies residues Asp-330–Ala-348. Residue Ser-334 is modified to Phosphoserine. Position 334 is a phosphoserine; by RK and GRK7 (Ser-334). 2 positions are modified to phosphothreonine: Thr-335 and Thr-336. Residues Thr-335 and Thr-336 each carry the phosphothreonine; by RK and GRK7 modification. Ser-338 bears the Phosphoserine; by RK and GRK7 mark. Phosphothreonine is present on residues Thr-340 and Thr-342. Position 343 is a phosphoserine; by RK and GRK7 (Ser-343).

Belongs to the G-protein coupled receptor 1 family. Opsin subfamily. Homodimer. May form a complex composed of RHO, GRK1 and RCVRN in a Ca(2+)-dependent manner; RCVRN prevents the interaction between GRK1 and RHO. Interacts with GRK1. Interacts (phosphorylated form) with SAG. Interacts with GNAT1. Interacts with GNAT3. SAG and G-proteins compete for a common binding site. Interacts with PRCD; the interaction promotes PRCD stability. Forms a complex with ASAP1 and ARF4. Forms a complex with ASAP1, RAB11A, Rabin8/RAB3IP, ARF4 and RAB11FIP3; the complex regulates Golgi-to-cilia rhodopsin/RHO transport in photoreceptors. In terms of processing, phosphorylated on some or all of the serine and threonine residues present in the C-terminal region. Post-translationally, contains one covalently linked retinal chromophore. Upon light absorption, the covalently bound 11-cis-retinal is converted to all-trans-retinal. After hydrolysis of the Schiff base and release of the covalently bound all-trans-retinal, active rhodopsin is regenerated by binding of a fresh molecule of 11-cis-retinal.

It is found in the membrane. The protein localises to the cell projection. The protein resides in the cilium. It localises to the photoreceptor outer segment. In terms of biological role, photoreceptor required for image-forming vision at low light intensity. Required for photoreceptor cell viability after birth. Light-induced isomerization of 11-cis to all-trans retinal triggers a conformational change that activates signaling via G-proteins. Subsequent receptor phosphorylation mediates displacement of the bound G-protein alpha subunit by the arrestin SAG and terminates signaling. This chain is Rhodopsin (RHO), found in Ovis aries (Sheep).